We begin with the raw amino-acid sequence, 711 residues long: Polyribonucleotide nucleotidyltransferase (711 aa).

D486 and D492 together coordinate Mg(2+). The KH domain occupies P553 to I612. One can recognise an S1 motif domain in the interval G622–K690. Residues K690–E711 form a disordered region. Over residues P698–E711 the composition is skewed to low complexity.

The protein belongs to the polyribonucleotide nucleotidyltransferase family. Component of the RNA degradosome, which is a multiprotein complex involved in RNA processing and mRNA degradation. The cofactor is Mg(2+).

It localises to the cytoplasm. The enzyme catalyses RNA(n+1) + phosphate = RNA(n) + a ribonucleoside 5'-diphosphate. Functionally, involved in mRNA degradation. Catalyzes the phosphorolysis of single-stranded polyribonucleotides processively in the 3'- to 5'-direction. The chain is Polyribonucleotide nucleotidyltransferase from Escherichia coli O127:H6 (strain E2348/69 / EPEC).